The sequence spans 278 residues: NH(3)-dependent NAD(+) synthetase (278 aa).

Residue 43-50 participates in ATP binding; sequence GISGGVDS. Asp49 contacts Mg(2+). Arg146 serves as a coordination point for deamido-NAD(+). Residue Thr166 coordinates ATP. Position 171 (Glu171) interacts with Mg(2+). Residues Lys179 and Asp186 each contribute to the deamido-NAD(+) site. Positions 195 and 217 each coordinate ATP. Residue 266–267 participates in deamido-NAD(+) binding; the sequence is HK.

This sequence belongs to the NAD synthetase family. As to quaternary structure, homodimer.

It catalyses the reaction deamido-NAD(+) + NH4(+) + ATP = AMP + diphosphate + NAD(+) + H(+). Its pathway is cofactor biosynthesis; NAD(+) biosynthesis; NAD(+) from deamido-NAD(+) (ammonia route): step 1/1. Functionally, catalyzes the ATP-dependent amidation of deamido-NAD to form NAD. Uses ammonia as a nitrogen source. This chain is NH(3)-dependent NAD(+) synthetase, found in Pseudoalteromonas translucida (strain TAC 125).